The following is a 433-amino-acid chain: MSSEDRHLGSSCGSFIKTEPSSPSSGIDALSHHSPSGSSDASGGFGIALSTHANGLDSPPMFAGAGLGGNPCRKSYEDCTSGIMEDSAIKCEYMLNAIPKRLCLVCGDIASGYHYGVASCEACKAFFKRTIQGNIEYNCPATNECEITKRRRKSCQACRFMKCLKVGMLKEGVRLDRVRGGRQKYKRRLDSENSPYLNLPISPPAKKPLTKIVSNLLGVEQDKLYAMPPNDIPEGDIKALTTLCELADRELVFLINWAKHIPGFPSLTLGDQMSLLQSAWMEILILGIVYRSLPYDDKLAYAEDYIMDEEHSRLVGLLDLYRAILQLVRRYKKLKVEKEEFMILKALALANSDSMYIENLEAVQKLQDLLHEALQDYELSQRHEEPRRAGKLLLTLPLLRQTAAKAVQHFYSVKLQGKVPMHKLFLEMLEAKV.

Positions 1-38 (MSSEDRHLGSSCGSFIKTEPSSPSSGIDALSHHSPSGS) are disordered. Residues 93-211 (YMLNAIPKRL…SPPAKKPLTK (119 aa)) form an interaction with NANOG region. A DNA-binding region (nuclear receptor) is located at residues 100–186 (KRLCLVCGDI…RVRGGRQKYK (87 aa)). 2 NR C4-type zinc fingers span residues 103 to 123 (CLVCGDIASGYHYGVASCEAC) and 139 to 163 (CPATNECEITKRRRKSCQACRFMKC). The essential for ESRRB transcriptional activity and interaction with NCOA3 stretch occupies residues 203-433 (PPAKKPLTKI…LFLEMLEAKV (231 aa)). An NR LBD domain is found at 208 to 432 (PLTKIVSNLL…KLFLEMLEAK (225 aa)).

The protein belongs to the nuclear hormone receptor family. NR3 subfamily. As to quaternary structure, binds DNA as a monomer. Interacts with NR0B1; represses ESRRB activity at the GATA6 promoter. Interacts with NANOG; reciprocally modulates their transcriptional activities and activates POU5F1 expression. Interacts with NCOA3; mediates the interaction between ESRRB and RNA polymerase II complexes and allows NCOA3 corecruitment to ESRRB, KLF4, NANOG, and SOX2 enhancer regions to trigger ESRRB-dependent gene activation involved in self-renewal and pluripotency. Interacts with KDM1A; co-occupes the core set of ESRRB targets including ELF5 and EOMES. Interacts with the multiprotein complex Integrator, at least composed of INTS1, INTS2, INTS3, INTS4, INTS5, INTS6, INTS7, INTS8, INTS9/RC74, INTS10, INTS11/CPSF3L and INTS12; ESRRB is probably not a core component of the integrator complex and associates to integrator via its interaction with INTS1 and INTS9; attracts the transcriptional machinery. Interacts with JARID2. Interacts with POU5F1; recruits ESRRB near the POU5F1-SOX2 element in the NANOG proximal promoter leading to activation of NANOG expression; the interaction is DNA independent. Acetylated by PCAF/KAT2 (in vitro). Highly expressed in undifferentiated ESCs. Expressed in immature horizontal cells and in rod photoreceptors at intermediate and late stages of differentiation. Expressed in endolymph-producing epithelial cells.

The protein resides in the nucleus. Its subcellular location is the cytoplasm. It localises to the chromosome. In terms of biological role, transcription factor that binds a canonical ESRRB recognition (ERRE) sequence 5'TCAAGGTCA-3' localized on promoter and enhancer of targets genes regulating their expression or their transcriptional activity. Plays a role, in a LIF-independent manner, in maintainance of self-renewal and pluripotency of embryonic and trophoblast stem cells through different signaling pathways including FGF signaling pathway and Wnt signaling pathways. Involved in morula development (2-16 cells embryos) by acting as a regulator at the 8-cell stage. Upon FGF signaling pathway activation, interacts with KDM1A by directly binding to enhancer site of ELF5 and EOMES and activating their transcription leading to self-renewal of trophoblast stem cells. Also regulates expression of multiple rod-specific genes and is required for survival of this cell type. Plays a role as transcription factor activator of GATA6, NR0B1, POU5F1 and PERM1. Plays a role as transcription factor repressor of NFE2L2 transcriptional activity and ESR1 transcriptional activity. During mitosis remains bound to a subset of interphase target genes, including pluripotency regulators, through the canonical ESRRB recognition (ERRE) sequence, leading to their transcriptional activation in early G1 phase. Can coassemble on structured DNA elements with other transcription factors like SOX2, POU5F1, KDM1A and NCOA3 to trigger ESRRB-dependent gene activation. This mechanism, in the case of SOX2 corecruitment prevents the embryonic stem cells (ESCs) to epiblast stem cells (EpiSC) transition through positive regulation of NR0B1 that inhibits the EpiSC transcriptional program. Also plays a role inner ear development by controlling expression of ion channels and transporters and in early placentation. This Mus musculus (Mouse) protein is Steroid hormone receptor ERR2.